Consider the following 453-residue polypeptide: uncharacterized protein (453 aa).

The Cytoplasmic segment spans residues methionine 1–proline 110. The chain crosses the membrane as a helical span at residues isoleucine 111–isoleucine 131. At valine 132–lysine 172 the chain is on the lumenal side. The chain crosses the membrane as a helical span at residues phenylalanine 173 to isoleucine 193. Residues glycine 194–alanine 201 lie on the Cytoplasmic side of the membrane. Residues valine 202–valine 222 form a helical membrane-spanning segment. Topologically, residues glycine 223 to asparagine 234 are lumenal. A helical transmembrane segment spans residues serine 235–threonine 255. Topologically, residues histidine 256 to serine 269 are cytoplasmic. A helical transmembrane segment spans residues leucine 270 to alanine 290. The Lumenal portion of the chain corresponds to lysine 291–lysine 332. The chain crosses the membrane as a helical span at residues isoleucine 333 to threonine 353. The Cytoplasmic portion of the chain corresponds to glycine 354 to valine 371. The chain crosses the membrane as a helical span at residues alanine 372–isoleucine 392. Residues glycine 393 to serine 413 are Lumenal-facing. The helical transmembrane segment at valine 414–isoleucine 434 threads the bilayer. Residues alanine 435–alanine 453 lie on the Cytoplasmic side of the membrane.

Belongs to the TPT transporter family.

The protein resides in the membrane. Its function is as follows. Able to suppress the functional loss of YPT1. May form a channel. Protein SLY41 is not essential for cell viability. The SLY41 gene is a multicopy suppressor. This is an uncharacterized protein from Saccharomyces cerevisiae (strain ATCC 204508 / S288c) (Baker's yeast).